A 946-amino-acid polypeptide reads, in one-letter code: Bifunctional glutamine synthetase adenylyltransferase/adenylyl-removing enzyme (946 aa).

An adenylyl removase region spans residues 1-440 (MKPLSSPLQQ…VFNELIGDDE (440 aa)). The adenylyl transferase stretch occupies residues 449–946 (SEQWRELWQD…ASWQKWLVEE (498 aa)).

This sequence belongs to the GlnE family. Mg(2+) serves as cofactor.

It catalyses the reaction [glutamine synthetase]-O(4)-(5'-adenylyl)-L-tyrosine + phosphate = [glutamine synthetase]-L-tyrosine + ADP. The enzyme catalyses [glutamine synthetase]-L-tyrosine + ATP = [glutamine synthetase]-O(4)-(5'-adenylyl)-L-tyrosine + diphosphate. Functionally, involved in the regulation of glutamine synthetase GlnA, a key enzyme in the process to assimilate ammonia. When cellular nitrogen levels are high, the C-terminal adenylyl transferase (AT) inactivates GlnA by covalent transfer of an adenylyl group from ATP to specific tyrosine residue of GlnA, thus reducing its activity. Conversely, when nitrogen levels are low, the N-terminal adenylyl removase (AR) activates GlnA by removing the adenylyl group by phosphorolysis, increasing its activity. The regulatory region of GlnE binds the signal transduction protein PII (GlnB) which indicates the nitrogen status of the cell. This Escherichia coli O45:K1 (strain S88 / ExPEC) protein is Bifunctional glutamine synthetase adenylyltransferase/adenylyl-removing enzyme.